A 47-amino-acid polypeptide reads, in one-letter code: Lysis protein for colicins E2 and E3 (47 aa).

Positions 1-19 (MKKITGIILLLLAVIILSA) are cleaved as a signal peptide. Cys-20 carries the N-palmitoyl cysteine lipid modification. A lipid anchor (S-diacylglycerol cysteine) is attached at Cys-20.

The protein localises to the cell outer membrane. Functionally, lysis proteins are required for both colicin release and partial cell lysis. The chain is Lysis protein for colicins E2 and E3 (hic) from Escherichia coli.